The primary structure comprises 131 residues: Small ribosomal subunit protein bS16 (131 aa).

The segment at 87–131 (PGAEGTYRVPTANTKPPRIPGGGAAKAVEAPAEAPAEAETPASES) is disordered. A compositionally biased stretch (low complexity) spans 111 to 131 (AKAVEAPAEAPAEAETPASES).

This sequence belongs to the bacterial ribosomal protein bS16 family.

The protein is Small ribosomal subunit protein bS16 of Kineococcus radiotolerans (strain ATCC BAA-149 / DSM 14245 / SRS30216).